The chain runs to 513 residues: Probable vesicular acetylcholine transporter-A (513 aa).

The Cytoplasmic segment spans residues 1–39; it reads MATEESGGLAQTAAVKLSEMGERTKQLGNAIQDPERQRR. The helical transmembrane segment at 40–60 threads the bilayer; it reads IILVIVCVALLLDNMLYMVIV. The Lumenal, vesicle segment spans residues 61–98; it reads PIVPDYLAHLESESEQAHVKGNSSINITQNENFDLQIG. 2 N-linked (GlcNAc...) asparagine glycosylation sites follow: asparagine 82 and asparagine 86. A helical transmembrane segment spans residues 99–119; the sequence is VLFASKAILQLLVNPLTGTFI. Residues 120-125 lie on the Cytoplasmic side of the membrane; that stretch reads DRVGYD. A helical membrane pass occupies residues 126–146; sequence IPLLIGLSIMFVSTCIFAFAE. Residues 147–156 are Lumenal, vesicle-facing; the sequence is NYATLFMARS. The helical transmembrane segment at 157–174 threads the bilayer; it reads LQGLGSAFADTSGIAMIA. Over 175–186 the chain is Cytoplasmic; it reads DKYAEESERSRA. A helical membrane pass occupies residues 187 to 207; it reads LGIALAFISFGSLAAPPFGGV. Over 208–215 the chain is Lumenal, vesicle; the sequence is LYEFAGKR. The helical transmembrane segment at 216-236 threads the bilayer; sequence FPFIALACVCLADGILCLTVL. Residues 237-257 lie on the Cytoplasmic side of the membrane; it reads KPFSSRTRENMPVGTPIYKLM. The chain crosses the membrane as a helical span at residues 258–278; the sequence is IDPYIAVVAGALTTCNIPLAF. Topologically, residues 279–296 are lumenal, vesicle; sequence LEPTIANWMEETMNASQW. An N-linked (GlcNAc...) asparagine glycan is attached at asparagine 292. Residues 297–317 traverse the membrane as a helical segment; that stretch reads QIGITWLPAFFPHILGVYLTV. The Cytoplasmic segment spans residues 318–327; the sequence is KLAAKYPHLQ. The helical transmembrane segment at 328-348 threads the bilayer; it reads WFYGALGMVIIGASSCIVPAC. Residues 349–353 lie on the Lumenal, vesicle side of the membrane; it reads KNFEQ. The helical transmembrane segment at 354 to 374 threads the bilayer; the sequence is LIIPLCGVCFGIALVDTALLP. At 375–390 the chain is on the cytoplasmic side; sequence TLAFLVDVRHVSVYGS. The chain crosses the membrane as a helical span at residues 391–411; that stretch reads VYAIADISYCVAYALGPIVAG. At 412 to 418 the chain is on the lumenal, vesicle side; sequence KIVHDLG. A helical transmembrane segment spans residues 419-439; sequence FVQLNLGMGLANVLYAPALLL. Topologically, residues 440–513 are cytoplasmic; that stretch reads LRNVSLMKPS…EEETSEPEYI (74 aa). A disordered region spans residues 475 to 513; it reads RKKHGYSSSGNCVPIDENGTFAGQSKSFSEEETSEPEYI. Over residues 504–513 the composition is skewed to acidic residues; the sequence is EEETSEPEYI.

It belongs to the major facilitator superfamily. Vesicular transporter family.

It is found in the membrane. Functionally, involved in acetylcholine transport into synaptic vesicles. The polypeptide is Probable vesicular acetylcholine transporter-A (Danio rerio (Zebrafish)).